A 1603-amino-acid polypeptide reads, in one-letter code: MRVKPQGLVVTSSAVCSSPDYLREPKYYPGGPPTPRPLLPTRPPASPPDKAFSTHAFSENPRPPPRRDPSTRRPPVLAKGDDPLPPRAARPVSQARCPTPVGDGSSSRRCWDNGRVNLRPVVQLIDIMKDLTRLSQDLQHSGVHLDCGGLRLSRPPAPPPGDLQYSFFSSPSLANSIRSPEERATPHAKSERPSHPLYEPEPEPRDSPQPGQGHSPGATAAATGLPPEPEPDSTDYSELADADILSELASLTCPEAQLLEAQALEPPSPEPEPQLLDPQPRFLDPQALEPLGEALELPPLQPLADPLGLPGLALQALDTLPDSLESQLLDPQALDPLPKLLDVPGRRLEPQQPLGHCPLAEPLRLDLCSPHGPPGPEGHPKYALRRTDRPKILCRRRKAGRGRKADAGPEGRLLPLPMPTGLVAALAEPPPPPPPPPPALPGPGPVSVPELKPESSQTPVVSTRKGKCRGVRRMVVKMAKIPVSLGRRNKTTYKVSSLSSSLSVEGKELGLRVSAEPTPLLKMKNNGRNVVVVFPPGEMPIILKRKRGRPPKNLLLGPGKPKEPAVVAAEAATVAAATMAMPEVKKRRRRKQKLASPQPSYAADANDSKAEYSDVLAKLAFLNRQSQCAGRCSPPRCWTPSEPESVHQAPDTQSISHFLHRVQGFRRRGGKAGGFGGRGGGHAAKSARCSFSDFFEGIGKKKKVVAVAAAGVGGPGLTELGHPRKRGRGEVDAVTGKPKRKRRSRKNGTLFPEQVPSGPGFGEAGAEWAGDKGGGWAPHHGHPGGQAGRNCGFQGTEARAFASTGLESGASGRGSYYSTGAPSGQTELSQERQNLFTGYFRSLLDSDDSSDLLDFALSASRPESRKASGTYAGPPTSALPAQRGLATFPSRGAKASPVAVGSSGAGADPSFQPVLSARQTFPPGRAASYGLTPAASDCRAAETFPKLVPPPSAMARSPTTHPPANTYLPQYGGYGAGQSVFAPTKPFTGQDCANSKDCSFAYGSGNSLPASPSSAHSAGYAPPPTGGPCLPPSKASFFSSSEGAPFSGSAPTPLRCDSRASTVSPGGYMVPKGTTASATSAASAASSSSSSFQPSPENCRQFAGASQWPFRQGYGGLDWASEAFSQLYNPSFDCHVSEPNVILDISNYTPQKVKQQTAVSETFSESSSDSTQFNQPVGGGGFRRANSEASSSEGQSSLSSLEKLMMDWNEASSAPGYNWNQSVLFQSSSKPGRGRRKKVDLFEASHLGFPTSASAAASGYPSKRSTGPRQPRGGRGGGACSAKKERGGAAAKAKFIPKPQPVNPLFQDSPDLGLDYYSGDSSMSPLPSQSRAFGVGERDPCDFIGPYSMNPSTPSDGTFGQGFHCDSPSLGAPELDGKHFPPLAHPPTVFDAGLQKAYSPTCSPTLGFKEELRPPPTKLAACEPLKHGLQGASLGHAAAAQAHLSCRDLPLGQPHYDSPSCKGTAYWYPPGSAARSPPYEGKVGTGLLADFLGRTEAACLSAPHLASPPATPKADKEPLEMARPPGPPRGPAAAAAGYGCPLLSDLTLSPVPRDSLLPLQDTAYRYPGFMPQAHPGLGGGPKSGFLGPMAEPHPEDTFTVTSL.

Disordered stretches follow at residues 19-108 (PDYL…SSSR), 150-236 (LRLS…STDY), 264-285 (LEPP…FLDP), and 394-467 (CRRR…RKGK). Residues 30-47 (GGPPTPRPLLPTRPPASP) show a composition bias toward pro residues. Lysine 79 carries the N6-acetyllysine modification. The segment covering 166-178 (SFFSSPSLANSIR) has biased composition (polar residues). Basic and acidic residues predominate over residues 179 to 194 (SPEERATPHAKSERPS). Residues 216–225 (PGATAAATGL) show a composition bias toward low complexity. Serine 268 is subject to Phosphoserine. Residues 273–285 (PQLLDPQPRFLDP) show a composition bias toward low complexity. Residues 396 to 408 (RRKAGRGRKADAG) constitute a DNA-binding region (a.T hook 1). The span at 428–446 (EPPPPPPPPPPALPGPGPV) shows a compositional bias: pro residues. The a.T hook 2 DNA-binding region spans 544–556 (KRKRGRPPKNLLL). The tract at residues 581–607 (MPEVKKRRRRKQKLASPQPSYAADAND) is disordered. Residue serine 596 is modified to Phosphoserine. Residue lysine 609 forms a Glycyl lysine isopeptide (Lys-Gly) (interchain with G-Cter in SUMO2) linkage. Disordered regions lie at residues 717-792 (LTEL…RNCG) and 806-827 (LESG…GQTE). The span at 737 to 746 (KPKRKRRSRK) shows a compositional bias: basic residues. The segment covering 816–827 (YYSTGAPSGQTE) has biased composition (polar residues). Phosphoserine occurs at positions 829 and 846. Omega-N-methylarginine is present on arginine 891. Phosphoserine is present on residues serine 896 and serine 1064. 2 disordered regions span residues 1159-1198 (VSET…QSSL) and 1253-1286 (ASAA…KKER). Low complexity-rich tracts occupy residues 1160-1171 (SETFSESSSDST) and 1187-1198 (SEASSSEGQSSL). At serine 1187 the chain carries Phosphoserine. Residues serine 1322, serine 1324, and serine 1399 each carry the phosphoserine modification. At threonine 1401 the chain carries Phosphothreonine. At serine 1403 the chain carries Phosphoserine. Lysine 1409 is covalently cross-linked (Glycyl lysine isopeptide (Lys-Gly) (interchain with G-Cter in SUMO2)). Positions 1503 to 1533 (PHLASPPATPKADKEPLEMARPPGPPRGPAA) are disordered. Serine 1507 and serine 1549 each carry phosphoserine.

Its subcellular location is the nucleus. It is found in the chromosome. Its function is as follows. Transcription factor required for the proper patterning of the epidermis, which plays a key role in early epithelial morphogenesis. Directly binds promoter and enhancer regions and acts by maintaining local enhancer-promoter chromatin architecture. Interacts with many sequence-specific zinc-finger transcription factors and methyl-CpG-binding proteins to regulate the expression of mesoderm genes that wire surface ectoderm stratification. This chain is Transcription factor Gibbin, found in Homo sapiens (Human).